Here is a 228-residue protein sequence, read N- to C-terminus: Deoxyribose-phosphate aldolase (228 aa).

Asp96 functions as the Proton donor/acceptor in the catalytic mechanism. Lys157 functions as the Schiff-base intermediate with acetaldehyde in the catalytic mechanism. Lys185 serves as the catalytic Proton donor/acceptor.

This sequence belongs to the DeoC/FbaB aldolase family. DeoC type 1 subfamily.

It is found in the cytoplasm. It carries out the reaction 2-deoxy-D-ribose 5-phosphate = D-glyceraldehyde 3-phosphate + acetaldehyde. It functions in the pathway carbohydrate degradation; 2-deoxy-D-ribose 1-phosphate degradation; D-glyceraldehyde 3-phosphate and acetaldehyde from 2-deoxy-alpha-D-ribose 1-phosphate: step 2/2. Catalyzes a reversible aldol reaction between acetaldehyde and D-glyceraldehyde 3-phosphate to generate 2-deoxy-D-ribose 5-phosphate. The chain is Deoxyribose-phosphate aldolase from Picosynechococcus sp. (strain ATCC 27264 / PCC 7002 / PR-6) (Agmenellum quadruplicatum).